A 508-amino-acid chain; its full sequence is Maturase K (508 aa).

The protein belongs to the intron maturase 2 family. MatK subfamily.

The protein localises to the plastid. It is found in the chloroplast. Functionally, usually encoded in the trnK tRNA gene intron. Probably assists in splicing its own and other chloroplast group II introns. The polypeptide is Maturase K (Antirrhinum majus (Garden snapdragon)).